Consider the following 393-residue polypeptide: MKWLLVAVLTSLTIFSALTQSHLLHGSPVNSLCADLIHPANYSCTEHSIQTKDGYILALQRVASLGPRLQSGPPVLLQHGLFMAGDVWFLNSPKESLGFILADHGFDVWVGNVRGTRYSYGHVTLSDTDKEFWDWSWQDLAMYDLAEMIQYLYSISNSKIFLVGHSQGTIMSFAALTQPHVAEMVEAAALLCPISYLDHVTAPLVERMVFMHLDQMVVALGLHQINFRSDMLVKLVDSLCEGHMDCTDFLTSITGTNCCFNASKIEYYLDYEPHPSSVKNIRHLFQMIRKGTFAQYDYGYFKNLRTYGLSKPPEFILSHIPASLPMWMGYGGTDGLADVTDVEHTLAELPSSPELLYLEDYGHIDFVLGSSAKEDVYKHMIQFFRAKVKSSSW.

The N-terminal stretch at 1–20 (MKWLLVAVLTSLTIFSALTQ) is a signal peptide. An N-linked (GlcNAc...) asparagine glycan is attached at N41. Catalysis depends on S166, which acts as the Nucleophile. N261 is a glycosylation site (N-linked (GlcNAc...) asparagine). Catalysis depends on charge relay system residues D334 and H363.

Belongs to the AB hydrolase superfamily. Lipase family. Expressed in seedlings, roots, leaves, flowers and siliques. Specifically expressed in the epidermis.

It is found in the secreted. It catalyses the reaction a triacylglycerol + H2O = a diacylglycerol + a fatty acid + H(+). The catalysed reaction is 1,2,3-tributanoylglycerol + H2O = dibutanoylglycerol + butanoate + H(+). The enzyme catalyses 1,2,3-trioctanoylglycerol + H2O = dioctanoylglycerol + octanoate + H(+). The protein operates within lipid metabolism; glycerolipid metabolism. Triacylglycerol (TAG) lipase active on triolein, trioctanoin, tributyrin and 1,3-Diolein, but not on phospho- and galactolipids. Involved but dispensable for TAG storage breakdown during seed germination. In Arabidopsis thaliana (Mouse-ear cress), this protein is Triacylglycerol lipase 1.